The sequence spans 131 residues: Major pollen allergen Pla l 1 (131 aa).

3 disulfides stabilise this stretch: C17–C86, C20–C131, and C42–C74. Zn(2+) contacts are provided by H21, D45, D73, and E88. Residue N107 is glycosylated (N-linked (GlcNAc...) asparagine).

This sequence belongs to the Ole e I family. Post-translationally, exists in two variants: glycosylated and non-glycosylated. Carries a complex, major N-linked glycan, with a alpha-1,3-fucose residue in its structure and probably also a beta-1,2-xylose. The average modification of molecular mass due to glycosylation is approximately 969 Da.

Its subcellular location is the secreted. The polypeptide is Major pollen allergen Pla l 1 (Plantago lanceolata (English plantain)).